The following is a 144-amino-acid chain: Glycine-rich protein DC9.1 (144 aa).

The chain crosses the membrane as a helical span at residues 5–25; it reads IFLLLGLSIAFAILISSEVAA. 11 repeat units span residues 37–42, 43–48, 50–55, 56–61, 63–68, 69–74, 76–81, 82–87, 89–94, 102–107, and 108–113. An 11 X 6 AA tandem repeats of G-Y-[NH]-N-G -G region spans residues 37–113; the sequence is GYNNGGGYHN…NNGGGHHGGG (77 aa).

Belongs to the GRP family.

The protein resides in the membrane. The protein is Glycine-rich protein DC9.1 of Daucus carota (Wild carrot).